Here is a 96-residue protein sequence, read N- to C-terminus: Large ribosomal subunit protein uL23 (96 aa).

Belongs to the universal ribosomal protein uL23 family. In terms of assembly, part of the 50S ribosomal subunit. Contacts protein L29, and trigger factor when it is bound to the ribosome.

Its function is as follows. One of the early assembly proteins it binds 23S rRNA. One of the proteins that surrounds the polypeptide exit tunnel on the outside of the ribosome. Forms the main docking site for trigger factor binding to the ribosome. The protein is Large ribosomal subunit protein uL23 of Brevibacillus brevis (strain 47 / JCM 6285 / NBRC 100599).